Reading from the N-terminus, the 146-residue chain is MTKRIEEKIEGVIESLGYLLYDVSLVKENEHNILRVSLKNPNGAVSLDICQQVSEIISPLLDVCDFIQDAYILEVSSMGLERVLKTPKHFKLSLGEKVEVKLTNKESFQAVLKDANDWSADFELENHAIKSVEYKDLKKVKTLFEW.

This sequence belongs to the RimP family.

The protein localises to the cytoplasm. Required for maturation of 30S ribosomal subunits. The chain is Ribosome maturation factor RimP from Helicobacter pylori (strain P12).